The sequence spans 505 residues: uncharacterized protein (505 aa).

A signal peptide spans 1 to 19; that stretch reads MILFTAIILVASVVHVVVS. Topologically, residues 20-483 are extracellular; the sequence is SPQQCYYCVE…EQPNSAPRGE (464 aa). A helical membrane pass occupies residues 484-504; the sequence is IHQLFRCTFVAVFIVFACFIV. Residue C505 is a topological domain, cytoplasmic.

In terms of tissue distribution, component of the acid-insoluble and acid-soluble organic matrix of the aragonitic skeleton (at protein level).

It is found in the membrane. This is an uncharacterized protein from Acropora millepora (Staghorn coral).